Here is a 333-residue protein sequence, read N- to C-terminus: tRNA-modifying protein YgfZ (333 aa).

Tryptophan 33 and tryptophan 195 together coordinate folate.

The protein belongs to the tRNA-modifying YgfZ family.

It localises to the cytoplasm. Folate-binding protein involved in regulating the level of ATP-DnaA and in the modification of some tRNAs. It is probably a key factor in regulatory networks that act via tRNA modification, such as initiation of chromosomal replication. The sequence is that of tRNA-modifying protein YgfZ from Pectobacterium atrosepticum (strain SCRI 1043 / ATCC BAA-672) (Erwinia carotovora subsp. atroseptica).